A 679-amino-acid polypeptide reads, in one-letter code: Glutamine-dependent NAD(+) synthetase (679 aa).

One can recognise a CN hydrolase domain in the interval valine 12–threonine 276. The active-site Proton acceptor; for glutaminase activity is glutamate 52. Catalysis depends on lysine 121, which acts as the For glutaminase activity. Tyrosine 127 contacts L-glutamine. Cysteine 176 serves as the catalytic Nucleophile; for glutaminase activity. L-glutamine contacts are provided by serine 203 and arginine 209. The interval glutamine 337 to glycine 679 is ligase. Residue glycine 366 to serine 373 coordinates ATP. Deamido-NAD(+) is bound at residue asparagine 456. Residue threonine 480 participates in ATP binding. Residues glutamate 485, tryptophan 490–tyrosine 493, and lysine 635 contribute to the deamido-NAD(+) site. The segment at leucine 639–arginine 658 is disordered.

It in the C-terminal section; belongs to the NAD synthetase family.

The catalysed reaction is deamido-NAD(+) + L-glutamine + ATP + H2O = L-glutamate + AMP + diphosphate + NAD(+) + H(+). It participates in cofactor biosynthesis; NAD(+) biosynthesis; NAD(+) from deamido-NAD(+) (L-Gln route): step 1/1. Its function is as follows. Catalyzes the ATP-dependent amidation of deamido-NAD to form NAD. Uses L-glutamine as a nitrogen source. The protein is Glutamine-dependent NAD(+) synthetase of Mycobacterium bovis (strain ATCC BAA-935 / AF2122/97).